Here is a 188-residue protein sequence, read N- to C-terminus: Xanthine phosphoribosyltransferase (188 aa).

Xanthine-binding residues include Leu-20 and Asn-27. 127-131 (AHGEA) serves as a coordination point for 5-phospho-alpha-D-ribose 1-diphosphate. Residue Lys-155 coordinates xanthine.

The protein belongs to the purine/pyrimidine phosphoribosyltransferase family. Xpt subfamily. Homodimer.

The protein localises to the cytoplasm. It carries out the reaction XMP + diphosphate = xanthine + 5-phospho-alpha-D-ribose 1-diphosphate. It functions in the pathway purine metabolism; XMP biosynthesis via salvage pathway; XMP from xanthine: step 1/1. Converts the preformed base xanthine, a product of nucleic acid breakdown, to xanthosine 5'-monophosphate (XMP), so it can be reused for RNA or DNA synthesis. This Heliobacterium modesticaldum (strain ATCC 51547 / Ice1) protein is Xanthine phosphoribosyltransferase.